Reading from the N-terminus, the 245-residue chain is Probable transcriptional regulatory protein BF2589 (245 aa).

The tract at residues 225-245 is disordered; sequence EDEDVQNVYTNMKPADNEGEE.

It belongs to the TACO1 family.

It localises to the cytoplasm. The sequence is that of Probable transcriptional regulatory protein BF2589 from Bacteroides fragilis (strain ATCC 25285 / DSM 2151 / CCUG 4856 / JCM 11019 / LMG 10263 / NCTC 9343 / Onslow / VPI 2553 / EN-2).